Consider the following 60-residue polypeptide: U-scutigerotoxin(02)-Tl4a (60 aa).

The protein belongs to the scutigerotoxin-02 family. In terms of processing, contains 3 disulfide bonds. As to expression, expressed by the venom gland.

It is found in the secreted. This is U-scutigerotoxin(02)-Tl4a from Thereuopoda longicornis (Long-legged centipede).